The chain runs to 414 residues: TAR DNA-binding protein 43 (414 aa).

Residues Lys79, Lys84, Lys95, Lys102, and Lys181 each participate in a glycyl lysine isopeptide (Lys-Gly) (interchain with G-Cter in SUMO2) cross-link. Positions Lys82–Arg98 match the Nuclear localization signal motif. RRM domains lie at Ser104–Glu200 and Arg191–Pro262. Residue Ser183 is modified to Phosphoserine. Residues Asp216–Met414 are interaction with UBQLN2. The short motif at Ile239–Ile250 is the Nuclear export signal element. The segment covering Glu261–Gly274 has biased composition (basic and acidic residues). 2 disordered regions span residues Glu261–Gln303 and Ala341–Ser373. Lys263 participates in a covalent cross-link: Glycyl lysine isopeptide (Lys-Gly) (interchain with G-Cter in SUMO2). A compositionally biased stretch (gly residues) spans Arg275–Gln303. The residue at position 292 (Ser292) is a Phosphoserine. Arg293 is modified (omega-N-methylarginine). Low complexity predominate over residues Ser342–Asn358.

Homodimer. Homooligomer (via its N-terminal domain). Interacts with BRDT. Binds specifically to pyrimidine-rich motifs of TAR DNA and to single stranded TG repeated sequences. Binds to RNA, specifically to UG repeated sequences with a minimum of six contiguous repeats. Interacts with ATXN2; the interaction is RNA-dependent. Interacts with MATR3. Interacts with UBQLN2. Interacts with HNRNPA2B1. Interacts with ZNF106. Interacts with CNOT7/CAF1. Interacts with CRY2. Interacts with PPIA/CYPA; the interaction is dependent on RNA-binding activity of TARDBP and PPIase activity of PPIA/CYPA and acetylation of PPIA/CYPA at 'Lys-125' favors the interaction. Hyperphosphorylated in hippocampus, neocortex, and spinal cord from individuals affected with ALS and FTLDU. Phosphorylated upon cellular stress. In terms of processing, ubiquitinated in hippocampus, neocortex, and spinal cord from individuals affected with ALS and FTLDU. Post-translationally, cleaved to generate C-terminal fragments in hippocampus, neocortex, and spinal cord from individuals affected with ALS and FTLDU. In terms of tissue distribution, ubiquitously expressed. In particular, expression is high in pancreas, placenta, lung, genital tract and spleen.

Its subcellular location is the nucleus. It is found in the cytoplasm. It localises to the stress granule. The protein resides in the mitochondrion. In terms of biological role, RNA-binding protein that is involved in various steps of RNA biogenesis and processing. Preferentially binds, via its two RNA recognition motifs RRM1 and RRM2, to GU-repeats on RNA molecules predominantly localized within long introns and in the 3'UTR of mRNAs. In turn, regulates the splicing of many non-coding and protein-coding RNAs including proteins involved in neuronal survival, as well as mRNAs that encode proteins relevant for neurodegenerative diseases. Plays a role in maintaining mitochondrial homeostasis by regulating the processing of mitochondrial transcripts. Also regulates mRNA stability by recruiting CNOT7/CAF1 deadenylase on mRNA 3'UTR leading to poly(A) tail deadenylation and thus shortening. In response to oxidative insult, associates with stalled ribosomes localized to stress granules (SGs) and contributes to cell survival. Also participates in the normal skeletal muscle formation and regeneration, forming cytoplasmic myo-granules and binding mRNAs that encode sarcomeric proteins. Plays a role in the maintenance of the circadian clock periodicity via stabilization of the CRY1 and CRY2 proteins in a FBXL3-dependent manner. Negatively regulates the expression of CDK6. Regulates the expression of HDAC6, ATG7 and VCP in a PPIA/CYPA-dependent manner. The chain is TAR DNA-binding protein 43 from Homo sapiens (Human).